The chain runs to 77 residues: Sec-independent protein translocase protein TatA (77 aa).

Residues 1-21 (MGGLSIWHWLIVLLIVALVFG) form a helical membrane-spanning segment. Positions 43–77 (MKESEAPADAQQLPRSGSVNVDAKDAARSSDSNKA) are disordered. Basic and acidic residues predominate over residues 64–77 (DAKDAARSSDSNKA).

It belongs to the TatA/E family. The Tat system comprises two distinct complexes: a TatABC complex, containing multiple copies of TatA, TatB and TatC subunits, and a separate TatA complex, containing only TatA subunits. Substrates initially bind to the TatABC complex, which probably triggers association of the separate TatA complex to form the active translocon.

The protein resides in the cell inner membrane. In terms of biological role, part of the twin-arginine translocation (Tat) system that transports large folded proteins containing a characteristic twin-arginine motif in their signal peptide across membranes. TatA could form the protein-conducting channel of the Tat system. The chain is Sec-independent protein translocase protein TatA from Burkholderia mallei (strain NCTC 10247).